The following is a 444-amino-acid chain: Spermatogenesis-associated protein 1 (444 aa).

The stretch at 268–403 (SLLKIEREKI…RKLDTDKMKL (136 aa)) forms a coiled coil.

In terms of assembly, interacts with IFT20. In terms of tissue distribution, highly abundant in the testis, and is also expressed in the heart and kidney (at protein level).

The protein localises to the cytoplasmic vesicle. Its subcellular location is the secretory vesicle. The protein resides in the acrosome. The chain is Spermatogenesis-associated protein 1 (Spata1) from Mus musculus (Mouse).